The primary structure comprises 234 residues: NGTCAWLRPDGKTQVTVEYQNDHGAMVPIRVHTILISTQHDETVTNDEIAADLKEHVIKPVVPENYLDEKTIFHLNPSGRFVIGGPHGDAGLTGRKIIIDTYGGWGAHGGGAFSGKDPTKVDRSGAYIVRQAAKSIVASGLARRCIVQVSYAIGVPEPLSVFVDTYGTGKIPDREILKIVKETFDFRPGMISINLDLKRGGNGRFLKTAAYGHFGREDPDFTWEVVKPLKWEKA.

ATP-binding positions include 10 to 12 (DGK), 78 to 81 (SGRF), Asp89, 95 to 96 (RK), Ala112, Lys116, and Lys120. Asp89 is an L-methionine binding site. Lys120 is an L-methionine binding site.

Belongs to the AdoMet synthase family. In terms of assembly, homotetramer. Mn(2+) serves as cofactor. Requires Mg(2+) as cofactor. The cofactor is Co(2+). K(+) is required as a cofactor. In terms of tissue distribution, mainly in floral buds and roots.

The protein localises to the cytoplasm. The enzyme catalyses L-methionine + ATP + H2O = S-adenosyl-L-methionine + phosphate + diphosphate. It functions in the pathway amino-acid biosynthesis; S-adenosyl-L-methionine biosynthesis; S-adenosyl-L-methionine from L-methionine: step 1/1. Functionally, catalyzes the formation of S-adenosylmethionine from methionine and ATP. The reaction comprises two steps that are both catalyzed by the same enzyme: formation of S-adenosylmethionine (AdoMet) and triphosphate, and subsequent hydrolysis of the triphosphate. The polypeptide is S-adenosylmethionine synthase 1 (SMS-1) (Petroselinum crispum (Parsley)).